The chain runs to 320 residues: Cyclin-H (320 aa).

Ser5 carries the phosphoserine; by CDK8 modification. Residue Ser132 is modified to Phosphoserine. Ser304 is subject to Phosphoserine; by CDK8.

It belongs to the cyclin family. Cyclin C subfamily. Associates primarily with CDK7 and MAT1 to form the CAK complex. CAK can further associate with the core-TFIIH to form the TFIIH basal transcription factor.

The protein localises to the nucleus. Its function is as follows. Regulates CDK7, the catalytic subunit of the CDK-activating kinase (CAK) enzymatic complex. CAK activates the cyclin-associated kinases CDK1, CDK2, CDK4 and CDK6 by threonine phosphorylation. CAK complexed to the core-TFIIH basal transcription factor activates RNA polymerase II by serine phosphorylation of the repetitive C-terminal domain (CTD) of its large subunit (POLR2A), allowing its escape from the promoter and elongation of the transcripts. Involved in cell cycle control and in RNA transcription by RNA polymerase II. Its expression and activity are constant throughout the cell cycle. This is Cyclin-H (CCNH) from Bos taurus (Bovine).